A 218-amino-acid polypeptide reads, in one-letter code: 3,4-dihydroxy-2-butanone 4-phosphate synthase (218 aa).

D-ribulose 5-phosphate is bound by residues 37–38, D42, 150–154, and E174; these read RE and RSGHT. Residue E38 participates in Mg(2+) binding. H153 provides a ligand contact to Mg(2+).

It belongs to the DHBP synthase family. As to quaternary structure, homodimer. The cofactor is Mg(2+). Mn(2+) is required as a cofactor.

The catalysed reaction is D-ribulose 5-phosphate = (2S)-2-hydroxy-3-oxobutyl phosphate + formate + H(+). The protein operates within cofactor biosynthesis; riboflavin biosynthesis; 2-hydroxy-3-oxobutyl phosphate from D-ribulose 5-phosphate: step 1/1. Catalyzes the conversion of D-ribulose 5-phosphate to formate and 3,4-dihydroxy-2-butanone 4-phosphate. This is 3,4-dihydroxy-2-butanone 4-phosphate synthase from Hamiltonella defensa subsp. Acyrthosiphon pisum (strain 5AT).